Consider the following 691-residue polypeptide: Pleckstrin homology domain-containing family G member 7 (691 aa).

Disordered stretches follow at residues 1–48 (MEKT…ISTS) and 109–140 (TSEPERALNAADSLEPQTRPTDKYLPPELQPV). The region spanning 313 to 488 (MIFMNTLRYL…EGKVKWLDNF (176 aa)) is the DH domain. Asn395 is a glycosylation site (N-linked (GlcNAc...) asparagine). The PH domain maps to 535–668 (HLLYEGKLTL…WMAQITTAIS (134 aa)).

The chain is Pleckstrin homology domain-containing family G member 7 from Homo sapiens (Human).